Consider the following 389-residue polypeptide: MSKTAYVRTKPHLNIGTMGHVDHGKTTLTAAITKVLAERGSGTFVPFDRIDRAPEEAARGITINIAHVEYETDTRHYAHVDMPGHADYVKNMVTGAAQLDGAILVVSALDGIMPQTAEHVLLARQVGVDHIVVALNKADAGDEELTDLVELEVRDLLSEHGYGGDGAPVVRVSGLKALEGDPKWTASIEALLDAVDTYVPMPERYVDAPFLLPVENVLTITGRGTVVTGAVERGTVRVGNRVEVLGAGLETVVTGLETFGKPMDEAQAGDNVALLLRGVPRDAVRRGHVVAAPGSVVPRSRFSAQVYVLSAREGGRTTPVTSGYRPQFYIRTADVVGDVDLGEVGVARPGETVSMIVELGREVPLEPGLGFAIREGGRTVGAGTVTALV.

The 194-residue stretch at 10–203 (KPHLNIGTMG…AVDTYVPMPE (194 aa)) folds into the tr-type G domain. Positions 19–26 (GHVDHGKT) are G1. 19–26 (GHVDHGKT) serves as a coordination point for GTP. Residue T26 coordinates Mg(2+). The tract at residues 60 to 64 (GITIN) is G2. Residues 81 to 84 (DMPG) are G3. GTP contacts are provided by residues 81 to 85 (DMPGH) and 136 to 139 (NKAD). The tract at residues 136–139 (NKAD) is G4. Residues 173–175 (SGL) form a G5 region.

It belongs to the TRAFAC class translation factor GTPase superfamily. Classic translation factor GTPase family. EF-Tu/EF-1A subfamily. In terms of assembly, monomer.

It is found in the cytoplasm. The enzyme catalyses GTP + H2O = GDP + phosphate + H(+). GTP hydrolase that promotes the GTP-dependent binding of aminoacyl-tRNA to the A-site of ribosomes during protein biosynthesis. This is Elongation factor Tu-3 from Streptomyces ramocissimus.